A 369-amino-acid chain; its full sequence is GTPase Obg (369 aa).

The region spanning methionine 1–leucine 159 is the Obg domain. A disordered region spans residues leucine 128–glycine 147. In terms of domain architecture, OBG-type G spans alanine 160–alanine 334. GTP is bound by residues glycine 166–serine 173, phenylalanine 191–alanine 195, aspartate 213–glycine 216, asparagine 284–aspartate 287, and serine 315–leucine 317. Positions 173 and 193 each coordinate Mg(2+).

The protein belongs to the TRAFAC class OBG-HflX-like GTPase superfamily. OBG GTPase family. In terms of assembly, monomer. Requires Mg(2+) as cofactor.

The protein resides in the cytoplasm. Functionally, an essential GTPase which binds GTP, GDP and possibly (p)ppGpp with moderate affinity, with high nucleotide exchange rates and a fairly low GTP hydrolysis rate. Plays a role in control of the cell cycle, stress response, ribosome biogenesis and in those bacteria that undergo differentiation, in morphogenesis control. The sequence is that of GTPase Obg from Burkholderia multivorans (strain ATCC 17616 / 249).